The following is a 727-amino-acid chain: MGRRAKMVEKVKTLMEKHDQIRNMGICAHIDHGKTTLSDNLLAGAGMISKELAGDQLALDFDEEEAARGITIYAANVSMVHEYGGKEYLINLIDTPGHVDFGGDVTRAMRAIDGAVVVCCAVEGVMPQTETVLRQALKEKVKPVLFINKVDRLINELKLTPEELQGRFMKIIAEVNKLIEKMAPEEFKKEWLCDVVTGKVAFGSAYNNWAISVPYMQRSGISFKDIIDYCEQEKQGELADKAPLHEVILDMAIKHLPNPLQAQKYRIPNIWKGDAESEIGKSMVACDPNGPLAGVVTKIIVDKHAGAISACRLFSGRIKQGDDLYLVGSKQKARAQQVSIFMGAERVQVPSISAGNICALTGLREATAGETVCSPSEILEPGFESLTHTSEPVITVAIEAKNTKDLPKLIEILRQIAREDNTVRVEINEETGEHLISGMGELHIEVITNTKIGRDGGIEVDVGEPIVVYRETITGTSPEIEGKSPNKHNKLYMIAEPMDESVYAAYVEGKIHDEDYKKKTTADGEARLVEAGLDKDQAKKVMSIYNGNMIVNMTRGIVQLDEARELIIEGFKEGVRNGPLAAEKVQGVKIRLVDATFHEDAIHRGPAQIIPAVRFGVRDAVAQAKPVLLEPMQSVYINTPQDYMGDGMKEINNRRGQILDMEQEGDMSIIKSSVPVAEMFGFAGAIRGATQGRCLWSVEFSGFERVPAELQPKIAKQIRDRKGLKSE.

The tr-type G domain occupies 19-260 (DQIRNMGICA…MAIKHLPNPL (242 aa)). GTP-binding positions include 28–35 (AHIDHGKT), 94–98 (DTPGH), and 148–151 (NKVD). His-603 is modified (diphthamide).

It belongs to the TRAFAC class translation factor GTPase superfamily. Classic translation factor GTPase family. EF-G/EF-2 subfamily.

The protein localises to the cytoplasm. Catalyzes the GTP-dependent ribosomal translocation step during translation elongation. During this step, the ribosome changes from the pre-translocational (PRE) to the post-translocational (POST) state as the newly formed A-site-bound peptidyl-tRNA and P-site-bound deacylated tRNA move to the P and E sites, respectively. Catalyzes the coordinated movement of the two tRNA molecules, the mRNA and conformational changes in the ribosome. The protein is Elongation factor 2 of Methanococcus maripaludis (strain C7 / ATCC BAA-1331).